A 395-amino-acid chain; its full sequence is Elongation factor Tu (395 aa).

Residues 10-205 (KPHCNIGTIG…AVDSYIPQPE (196 aa)) form the tr-type G domain. Residues 19-26 (GHVDHGKT) form a G1 region. 19–26 (GHVDHGKT) is a GTP binding site. Threonine 26 contributes to the Mg(2+) binding site. Residues 60–64 (GITIA) are G2. Positions 81-84 (DCPG) are G3. GTP is bound by residues 81-85 (DCPGH) and 136-139 (NKMD). The tract at residues 136 to 139 (NKMD) is G4. The G5 stretch occupies residues 173–175 (SAL).

Belongs to the TRAFAC class translation factor GTPase superfamily. Classic translation factor GTPase family. EF-Tu/EF-1A subfamily. As to quaternary structure, monomer.

Its subcellular location is the cytoplasm. The catalysed reaction is GTP + H2O = GDP + phosphate + H(+). In terms of biological role, GTP hydrolase that promotes the GTP-dependent binding of aminoacyl-tRNA to the A-site of ribosomes during protein biosynthesis. In Acidiphilium cryptum (strain JF-5), this protein is Elongation factor Tu.